The following is a 615-amino-acid chain: Zinc metalloproteinase R519 (615 aa).

The Peptidase M13 domain maps to 1 to 611 (MTYRSCIPQN…LDPQLRSRIL (611 aa)). Zn(2+) is bound at residue His-454. Glu-455 is an active-site residue. Zn(2+) contacts are provided by His-458 and Glu-513. Asp-517 functions as the Proton donor in the catalytic mechanism.

Belongs to the peptidase M13 family. Zn(2+) serves as cofactor.

Functionally, zinc metalloprotease. This is Zinc metalloproteinase R519 from Acanthamoeba polyphaga (Amoeba).